The sequence spans 479 residues: Glycogen synthase (479 aa).

Residue Lys15 participates in ADP-alpha-D-glucose binding.

This sequence belongs to the glycosyltransferase 1 family. Bacterial/plant glycogen synthase subfamily.

The enzyme catalyses [(1-&gt;4)-alpha-D-glucosyl](n) + ADP-alpha-D-glucose = [(1-&gt;4)-alpha-D-glucosyl](n+1) + ADP + H(+). The protein operates within glycan biosynthesis; glycogen biosynthesis. Synthesizes alpha-1,4-glucan chains using ADP-glucose. The polypeptide is Glycogen synthase (Acidiphilium cryptum (strain JF-5)).